The sequence spans 268 residues: tRNA pseudouridine synthase A (268 aa).

The Nucleophile role is filled by Asp-52. Residue Tyr-110 coordinates substrate.

It belongs to the tRNA pseudouridine synthase TruA family. Homodimer.

It carries out the reaction uridine(38/39/40) in tRNA = pseudouridine(38/39/40) in tRNA. Functionally, formation of pseudouridine at positions 38, 39 and 40 in the anticodon stem and loop of transfer RNAs. This is tRNA pseudouridine synthase A from Prochlorococcus marinus (strain AS9601).